Consider the following 369-residue polypeptide: Anhydro-N-acetylmuramic acid kinase (369 aa).

12-19 (GTSLDGVD) lines the ATP pocket.

The protein belongs to the anhydro-N-acetylmuramic acid kinase family.

The enzyme catalyses 1,6-anhydro-N-acetyl-beta-muramate + ATP + H2O = N-acetyl-D-muramate 6-phosphate + ADP + H(+). It functions in the pathway amino-sugar metabolism; 1,6-anhydro-N-acetylmuramate degradation. The protein operates within cell wall biogenesis; peptidoglycan recycling. Its function is as follows. Catalyzes the specific phosphorylation of 1,6-anhydro-N-acetylmuramic acid (anhMurNAc) with the simultaneous cleavage of the 1,6-anhydro ring, generating MurNAc-6-P. Is required for the utilization of anhMurNAc either imported from the medium or derived from its own cell wall murein, and thus plays a role in cell wall recycling. This Escherichia coli O139:H28 (strain E24377A / ETEC) protein is Anhydro-N-acetylmuramic acid kinase.